Here is a 258-residue protein sequence, read N- to C-terminus: 14-3-3-like protein 16R (258 aa).

The segment at 238–258 is disordered; that stretch reads DMQDDGTDEIKEAAPKPDNNE. Positions 245–258 are enriched in basic and acidic residues; the sequence is DEIKEAAPKPDNNE.

Belongs to the 14-3-3 family.

The protein is 14-3-3-like protein 16R of Solanum tuberosum (Potato).